Here is a 462-residue protein sequence, read N- to C-terminus: Phosphoglucosamine mutase (462 aa).

Ser111 acts as the Phosphoserine intermediate in catalysis. Mg(2+)-binding residues include Ser111, Asp250, Asp252, and Asp254. A Phosphoserine modification is found at Ser111.

This sequence belongs to the phosphohexose mutase family. The cofactor is Mg(2+). In terms of processing, activated by phosphorylation.

It catalyses the reaction alpha-D-glucosamine 1-phosphate = D-glucosamine 6-phosphate. Functionally, catalyzes the conversion of glucosamine-6-phosphate to glucosamine-1-phosphate. The chain is Phosphoglucosamine mutase from Synechococcus sp. (strain WH7803).